We begin with the raw amino-acid sequence, 250 residues long: Ubiquinone/menaquinone biosynthesis C-methyltransferase UbiE (250 aa).

S-adenosyl-L-methionine contacts are provided by residues Thr73, Asp94, 122–123, and Ser139; that span reads NA.

It belongs to the class I-like SAM-binding methyltransferase superfamily. MenG/UbiE family.

The enzyme catalyses a 2-demethylmenaquinol + S-adenosyl-L-methionine = a menaquinol + S-adenosyl-L-homocysteine + H(+). It carries out the reaction a 2-methoxy-6-(all-trans-polyprenyl)benzene-1,4-diol + S-adenosyl-L-methionine = a 5-methoxy-2-methyl-3-(all-trans-polyprenyl)benzene-1,4-diol + S-adenosyl-L-homocysteine + H(+). The protein operates within quinol/quinone metabolism; menaquinone biosynthesis; menaquinol from 1,4-dihydroxy-2-naphthoate: step 2/2. Its pathway is cofactor biosynthesis; ubiquinone biosynthesis. Functionally, methyltransferase required for the conversion of demethylmenaquinol (DMKH2) to menaquinol (MKH2) and the conversion of 2-polyprenyl-6-methoxy-1,4-benzoquinol (DDMQH2) to 2-polyprenyl-3-methyl-6-methoxy-1,4-benzoquinol (DMQH2). This is Ubiquinone/menaquinone biosynthesis C-methyltransferase UbiE from Francisella tularensis subsp. tularensis (strain FSC 198).